The sequence spans 675 residues: MNPYQNKSECEILNAPLNNINMPNRYPFANDPNAVMKNGNYKDWLNECDGITPSIFGTLGVLASIVISTINLATSPSIGDAFALVSSIGEYWPETKTSFPLSVADVNRLIREALDQNAINRATGKFNGLMDTYNTVYLKNLQDWYDTRIPANPQGDSQLREAARRSLEEIERDFRKALAGEFAEAGSQIVLLPIYAQAANIHLLILKDAMQFRTDLGLIRPVGVPITTSAEDPFESEFLLRIKKYTDHCISYYDDGLAKIRSRGSDGETWWEFNKFRREMTLTVLDLVALYPTHNIKLYPIPTQTELSRVVYTDPVGCFGNRKSDIFSRLNFDYLENRLTRPREPFNYLNSVQLFASTVSNSNNGEVLRGNLNKIMFEGGWTASRSGDGVTTGTPFSTMDWSYGWGYPRKHYAEITSRSQALPGLNNSIHVIVGIDSFRAIGPGGQGDHTFSLPGGDMYDCGKVQINPLEDYRNSDHWISDMMTINQSVQLASNPTQTFAFSALSLGWHHSSAGNRNVYVYDKITQIPATKTVREHPMIKGPGFTGGDLADLSSNSDILQYDLRSDYDDRLTEDVPFRIRIRCASIGVSTISVDNWGSSSPQVTVASTAASLDTLKYESFQYVSIPGNYYFDSAPRIRLLRQPGRLLVDRIEIIPVNFFPLSEQENKSVDSLFIN.

It belongs to the delta endotoxin family.

Promotes colloidosmotic lysis by binding to the midgut epithelial cells of insects. The protein is Pesticidal crystal protein Cry25Aa (cry25Aa) of Bacillus thuringiensis subsp. jegathesan.